The chain runs to 402 residues: CMP-sialic acid transporter 3 (402 aa).

Residues 1–42 (MSGEVECRVCHAKVQVPMAAAAVSKAYDIHRSSVSSRQRALN) lie on the Cytoplasmic side of the membrane. The chain crosses the membrane as a helical span at residues 43-63 (VLLVSGDCVLAGLQPILVYMC). At 64–73 (KVDGKFKFSP) the chain is on the lumenal side. Residues 74–94 (VSVNFLTEITKIIFAIIMLCI) form a helical membrane-spanning segment. Over 95–118 (QARRLKVGEKPFLTVSTFMQAARN) the chain is Cytoplasmic. A helical membrane pass occupies residues 119–139 (NVLLAVPALFYAINNYMKFVM). The Lumenal segment spans residues 140–146 (QLYFNPA). Residues 147–167 (TVKMLGNLKVLVIAVLLKVIM) form a helical membrane-spanning segment. Topologically, residues 168–170 (RRR) are cytoplasmic. A helical membrane pass occupies residues 171–191 (FSTIQWEALALLLIGISVNQL). Over 192-202 (KSLPEGSSTLG) the chain is Lumenal. Residues 203–223 (LPVAAGAYLYTLFFVTVPALA) traverse the membrane as a helical segment. Residues 224–243 (SVYNEKALKSQFDTSIYLQN) lie on the Cytoplasmic side of the membrane. A helical membrane pass occupies residues 244-264 (LFLYGYGAIFNFLGLVITAII). The Lumenal portion of the chain corresponds to 265-280 (QGPSSFNILEGHSKAT). Residues 281–301 (MFLICNNAAQGILSSFFFKYA) traverse the membrane as a helical segment. At 302–321 (DTILKKYSSTIATIFTGVAS) the chain is on the cytoplasmic side. Residues 322 to 342 (AVLFGHTLTINFVLAISIVII) traverse the membrane as a helical segment. The Lumenal portion of the chain corresponds to 343-402 (SMHQYLSNQIKDEVPSSKIEMGDAHEHRSKESVVVNVSDSIATEAKHRHGTDERQPLLPV).

The protein belongs to the nucleotide-sugar transporter family. CMP-Sialate:CMP antiporter (TC 2.A.7.12) subfamily.

It localises to the golgi apparatus membrane. Functionally, sugar transporter involved in the transport of CMP-sialic acid from the cytoplasm into the Golgi. May transport important nucleotide sugars such as CMP-Kdo (2-keto-3-deoxy-D-manno-octulosonic acid) in physiological conditions. The polypeptide is CMP-sialic acid transporter 3 (Oryza sativa subsp. indica (Rice)).